A 550-amino-acid chain; its full sequence is Methionine--tRNA ligase (550 aa).

Residues 13 to 23 (PYANGPLHFGH) carry the 'HIGH' region motif. The Zn(2+) site is built by Cys145, Cys148, Cys158, and Cys161. The 'KMSKS' region signature appears at 331–335 (QFSKS). Lys334 contributes to the ATP binding site.

Belongs to the class-I aminoacyl-tRNA synthetase family. MetG type 1 subfamily. Monomer. Requires Zn(2+) as cofactor.

It is found in the cytoplasm. It catalyses the reaction tRNA(Met) + L-methionine + ATP = L-methionyl-tRNA(Met) + AMP + diphosphate. Is required not only for elongation of protein synthesis but also for the initiation of all mRNA translation through initiator tRNA(fMet) aminoacylation. The sequence is that of Methionine--tRNA ligase (metG) from Chlamydia muridarum (strain MoPn / Nigg).